Here is a 193-residue protein sequence, read N- to C-terminus: ATP-dependent Clp protease proteolytic subunit (193 aa).

Catalysis depends on Ser-98, which acts as the Nucleophile. The active site involves His-123.

This sequence belongs to the peptidase S14 family. As to quaternary structure, fourteen ClpP subunits assemble into 2 heptameric rings which stack back to back to give a disk-like structure with a central cavity, resembling the structure of eukaryotic proteasomes.

It localises to the cytoplasm. The enzyme catalyses Hydrolysis of proteins to small peptides in the presence of ATP and magnesium. alpha-casein is the usual test substrate. In the absence of ATP, only oligopeptides shorter than five residues are hydrolyzed (such as succinyl-Leu-Tyr-|-NHMec, and Leu-Tyr-Leu-|-Tyr-Trp, in which cleavage of the -Tyr-|-Leu- and -Tyr-|-Trp bonds also occurs).. Its function is as follows. Cleaves peptides in various proteins in a process that requires ATP hydrolysis. Has a chymotrypsin-like activity. Plays a major role in the degradation of misfolded proteins. ClpXP is involved in the complete degradation of the Site-2 clipped anti-sigma-W factor RsiW. This results in the release of SigW and the transcription activation of the genes under the control of the sigma-W factor. The protein is ATP-dependent Clp protease proteolytic subunit of Oceanobacillus iheyensis (strain DSM 14371 / CIP 107618 / JCM 11309 / KCTC 3954 / HTE831).